Here is a 120-residue protein sequence, read N- to C-terminus: UPF0102 protein PTH_1707 (120 aa).

Belongs to the UPF0102 family.

The protein is UPF0102 protein PTH_1707 of Pelotomaculum thermopropionicum (strain DSM 13744 / JCM 10971 / SI).